Consider the following 108-residue polypeptide: NADH dehydrogenase [ubiquinone] 1 alpha subcomplex subunit 8-A (108 aa).

2 consecutive CHCH domains span residues 28–69 (GIRC…LKDL) and 70–108 (HQRC…CPLK). 3 short sequence motifs (cx9C motif) span residues 31-41 (CMPENMAFLKC), 51-61 (CLEKGRDVTRC), and 73-83 (CPKEMDAYVGC). Cystine bridges form between cysteine 31–cysteine 61, cysteine 41–cysteine 51, cysteine 73–cysteine 105, and cysteine 83–cysteine 94. The Cx10C motif motif lies at 94 to 105 (CRKEQEAFEKVC).

The protein belongs to the complex I NDUFA8 subunit family. As to quaternary structure, complex I is composed of at least 49 different subunits.

The protein resides in the mitochondrion. It localises to the mitochondrion intermembrane space. Its function is as follows. Accessory subunit of the mitochondrial membrane respiratory chain NADH dehydrogenase (Complex I), that is believed not to be involved in catalysis. Complex I functions in the transfer of electrons from NADH to the respiratory chain. The immediate electron acceptor for the enzyme is believed to be ubiquinone. The protein is NADH dehydrogenase [ubiquinone] 1 alpha subcomplex subunit 8-A of Arabidopsis thaliana (Mouse-ear cress).